Here is a 461-residue protein sequence, read N- to C-terminus: Cysteine--tRNA ligase (461 aa).

A Zn(2+)-binding site is contributed by C30. The short motif at 32–42 (VTIYDLCHIGH) is the 'HIGH' region element. 3 residues coordinate Zn(2+): C211, H236, and E240. The short motif at 268-272 (KMSKS) is the 'KMSKS' region element. ATP is bound at residue K271.

This sequence belongs to the class-I aminoacyl-tRNA synthetase family. Monomer. Zn(2+) is required as a cofactor.

It is found in the cytoplasm. It carries out the reaction tRNA(Cys) + L-cysteine + ATP = L-cysteinyl-tRNA(Cys) + AMP + diphosphate. This chain is Cysteine--tRNA ligase, found in Shewanella putrefaciens (strain CN-32 / ATCC BAA-453).